The chain runs to 128 residues: Sulfurtransferase TusD (128 aa).

The active-site Cysteine persulfide intermediate is Cys78.

The protein belongs to the DsrE/TusD family. As to quaternary structure, heterohexamer, formed by a dimer of trimers. The hexameric TusBCD complex contains 2 copies each of TusB, TusC and TusD. The TusBCD complex interacts with TusE.

It localises to the cytoplasm. In terms of biological role, part of a sulfur-relay system required for 2-thiolation of 5-methylaminomethyl-2-thiouridine (mnm(5)s(2)U) at tRNA wobble positions. Accepts sulfur from TusA and transfers it in turn to TusE. This Escherichia coli O157:H7 protein is Sulfurtransferase TusD.